A 1051-amino-acid chain; its full sequence is Integrin alpha-3 (1051 aa).

The N-terminal stretch at 1 to 32 is a signal peptide; sequence MGPGPRCAPGDPGWMLGALALMVAASGRFAFA. Residues 33 to 991 lie on the Extracellular side of the membrane; sequence FNLDTRFLVV…LVEELPAEIE (959 aa). FG-GAP repeat units follow at residues 38–103, 110–171, 185–235, 236–292, 293–354, 356–411, and 415–477; these read RFLV…KDDC, EKSD…DLQL, CNSN…WDLS, EYSY…GGDL, KRKQ…TSFP, QPSL…GLLR, and QIVH…VARP. An N-linked (GlcNAc...) asparagine glycan is attached at asparagine 86. 3 disulfides stabilise this stretch: cysteine 94–cysteine 103, cysteine 140–cysteine 162, and cysteine 185–cysteine 197. Ca(2+) is bound by residues aspartate 315, asparagine 317, aspartate 319, aspartate 323, aspartate 378, asparagine 380, aspartate 382, aspartate 386, aspartate 439, aspartate 441, asparagine 443, tyrosine 445, and aspartate 447. Intrachain disulfides connect cysteine 485–cysteine 490 and cysteine 496–cysteine 550. N-linked (GlcNAc...) asparagine glycosylation is found at asparagine 500, asparagine 511, asparagine 573, and asparagine 605. Cysteine 615 and cysteine 621 form a disulfide bridge. Residues asparagine 656, asparagine 697, and asparagine 841 are each glycosylated (N-linked (GlcNAc...) asparagine). An intrachain disulfide couples cysteine 694 to cysteine 702. Cystine bridges form between cysteine 846–cysteine 904 and cysteine 911–cysteine 916. A disordered region spans residues 860 to 888; it reads LSDPGDKPHSPQRRRRQLDPGGDQGSPPV. Residues asparagine 923, asparagine 926, asparagine 935, and asparagine 969 are each glycosylated (N-linked (GlcNAc...) asparagine). The chain crosses the membrane as a helical span at residues 992–1019; it reads LWLVLVAVSAGLLLLGLIIILLWKCGFF. The GFFKR motif signature appears at 1017-1021; that stretch reads GFFKR. Over 1020–1051 the chain is Cytoplasmic; it reads KRARTRALYEAKRQKAEMKSQPSETERLTDDY.

Belongs to the integrin alpha chain family. Heterodimer of an alpha and a beta subunit. The alpha subunit is composed of a heavy and a light chain linked by a disulfide bond. Alpha-3 associates with beta-1. Interacts with HPS5. Interacts with FAP (seprase); the interaction occurs at the cell surface of invadopodia membrane in a collagen-dependent manner. Post-translationally, isoform 1, but not isoform 2, is phosphorylated on serine residues.

It localises to the cell membrane. It is found in the cell projection. The protein resides in the invadopodium membrane. The protein localises to the filopodium membrane. Functionally, integrin alpha-3/beta-1 is a receptor for fibronectin, laminin, collagen, epiligrin, thrombospondin and CSPG4. Integrin alpha-3/beta-1 provides a docking site for FAP (seprase) at invadopodia plasma membranes in a collagen-dependent manner and hence may participate in the adhesion, formation of invadopodia and matrix degradation processes, promoting cell invasion. Alpha-3/beta-1 may mediate with LGALS3 the stimulation by CSPG4 of endothelial cells migration. This Cricetulus griseus (Chinese hamster) protein is Integrin alpha-3 (ITGA3).